We begin with the raw amino-acid sequence, 331 residues long: Ferredoxin--NADP reductase (331 aa).

FAD contacts are provided by threonine 14, glutamate 33, glutamine 41, tyrosine 46, valine 86, phenylalanine 120, aspartate 284, and serine 327.

It belongs to the ferredoxin--NADP reductase type 2 family. Homodimer. FAD serves as cofactor.

It catalyses the reaction 2 reduced [2Fe-2S]-[ferredoxin] + NADP(+) + H(+) = 2 oxidized [2Fe-2S]-[ferredoxin] + NADPH. The polypeptide is Ferredoxin--NADP reductase (Picrophilus torridus (strain ATCC 700027 / DSM 9790 / JCM 10055 / NBRC 100828 / KAW 2/3)).